The primary structure comprises 723 residues: Fatty acid oxidation complex subunit alpha (723 aa).

Residues 1–189 (MIYQANTLQV…KVGLLDAIVE (189 aa)) are enoyl-CoA hydratase/isomerase. D296 is a substrate binding site. A 3-hydroxyacyl-CoA dehydrogenase region spans residues 311–723 (NKATERAAVL…FYDGQQASSL (413 aa)). NAD(+)-binding positions include M325, D344, 401–403 (VVE), K408, and S430. Residue H451 is the For 3-hydroxyacyl-CoA dehydrogenase activity of the active site. N454 serves as a coordination point for NAD(+). Positions 501 and 661 each coordinate substrate.

This sequence in the N-terminal section; belongs to the enoyl-CoA hydratase/isomerase family. In the C-terminal section; belongs to the 3-hydroxyacyl-CoA dehydrogenase family. In terms of assembly, heterotetramer of two alpha chains (FadB) and two beta chains (FadA).

The enzyme catalyses a (3S)-3-hydroxyacyl-CoA + NAD(+) = a 3-oxoacyl-CoA + NADH + H(+). It carries out the reaction a (3S)-3-hydroxyacyl-CoA = a (2E)-enoyl-CoA + H2O. It catalyses the reaction a 4-saturated-(3S)-3-hydroxyacyl-CoA = a (3E)-enoyl-CoA + H2O. The catalysed reaction is (3S)-3-hydroxybutanoyl-CoA = (3R)-3-hydroxybutanoyl-CoA. The enzyme catalyses a (3Z)-enoyl-CoA = a 4-saturated (2E)-enoyl-CoA. It carries out the reaction a (3E)-enoyl-CoA = a 4-saturated (2E)-enoyl-CoA. It participates in lipid metabolism; fatty acid beta-oxidation. In terms of biological role, involved in the aerobic and anaerobic degradation of long-chain fatty acids via beta-oxidation cycle. Catalyzes the formation of 3-oxoacyl-CoA from enoyl-CoA via L-3-hydroxyacyl-CoA. It can also use D-3-hydroxyacyl-CoA and cis-3-enoyl-CoA as substrate. This chain is Fatty acid oxidation complex subunit alpha, found in Vibrio atlanticus (strain LGP32) (Vibrio splendidus (strain Mel32)).